The primary structure comprises 112 residues: Nitrogenase-stabilizing/protective protein NifW (112 aa).

The protein belongs to the NifW family. As to quaternary structure, homotrimer; associates with NifD.

Its function is as follows. May protect the nitrogenase Fe-Mo protein from oxidative damage. The protein is Nitrogenase-stabilizing/protective protein NifW of Burkholderia vietnamiensis (strain G4 / LMG 22486) (Burkholderia cepacia (strain R1808)).